Here is a 70-residue protein sequence, read N- to C-terminus: DNA-directed RNA polymerase subunit omega (70 aa).

The protein belongs to the RNA polymerase subunit omega family. The RNAP catalytic core consists of 2 alpha, 1 beta, 1 beta' and 1 omega subunit. When a sigma factor is associated with the core the holoenzyme is formed, which can initiate transcription.

It carries out the reaction RNA(n) + a ribonucleoside 5'-triphosphate = RNA(n+1) + diphosphate. In terms of biological role, promotes RNA polymerase assembly. Latches the N- and C-terminal regions of the beta' subunit thereby facilitating its interaction with the beta and alpha subunits. The protein is DNA-directed RNA polymerase subunit omega of Bacillus cereus (strain B4264).